The chain runs to 766 residues: DENN domain-containing protein 1B (766 aa).

The region spanning Asp-14 to Thr-143 is the uDENN domain. Positions Gly-160–Lys-296 constitute a cDENN domain. Residues Gln-298 to Gly-375 form the dDENN domain. The short motif at Phe-378–Phe-382 is the FXDXF motif element. The tract at residues Asn-472–Thr-523 is disordered. The segment covering Lys-480–His-492 has biased composition (basic residues). Over residues Leu-499–Ile-509 the composition is skewed to acidic residues. Tyr-500 bears the Phosphotyrosine mark. Residues Ser-516, Ser-517, Ser-530, and Ser-533 each carry the phosphoserine modification. Residues Asp-547–Leu-556 carry the Clathrin box motif. Disordered regions lie at residues Leu-611–Gly-634 and Leu-652–Lys-732. 2 positions are modified to phosphoserine: Ser-632 and Ser-633. A compositionally biased stretch (polar residues) spans Thr-694–Asp-704. A compositionally biased stretch (basic and acidic residues) spans Lys-722 to Lys-732.

Interacts with RAB35. Interacts with clathrin heavy chain/CLTC. Interacts with components of the adapter protein complex 2 (AP-2) AP2A2 and AP2B1. Interacts with CD3E. In terms of processing, phosphorylated on serine and/or threonine, possibly regulating the guanine nucleotide exchange factor (GEF) activity. In terms of tissue distribution, expressed in a subset of dendritic cells (DCs).

Its subcellular location is the cytoplasm. The protein resides in the cytosol. It is found in the cytoplasmic vesicle. The protein localises to the clathrin-coated vesicle. Its function is as follows. Guanine nucleotide exchange factor (GEF) for RAB35 that acts as a regulator of T-cell receptor (TCR) internalization in TH2 cells. Acts by promoting the exchange of GDP to GTP, converting inactive GDP-bound RAB35 into its active GTP-bound form. Plays a role in clathrin-mediated endocytosis. Controls cytokine production in TH2 lymphocytes by controlling the rate of TCR internalization and routing to endosomes: acts by mediating clathrin-mediated endocytosis of TCR via its interaction with the adapter protein complex 2 (AP-2) and GEF activity. Dysregulation leads to impaired TCR down-modulation and recycling, affecting cytokine production in TH2 cells. In Mus musculus (Mouse), this protein is DENN domain-containing protein 1B.